The following is a 78-amino-acid chain: RNA-binding protein Hfq (78 aa).

A Sm domain is found at 10–69; that stretch reads DPFLNALRREHVPVSIYLVNGIKLQGQVESFDQYVVLLKNTVTQMVYKHAISTVVPARPV.

This sequence belongs to the Hfq family. As to quaternary structure, homohexamer.

In terms of biological role, RNA chaperone that binds small regulatory RNA (sRNAs) and mRNAs to facilitate mRNA translational regulation in response to envelope stress, environmental stress and changes in metabolite concentrations. Also binds with high specificity to tRNAs. This Dechloromonas aromatica (strain RCB) protein is RNA-binding protein Hfq.